Reading from the N-terminus, the 434-residue chain is Sensor histidine kinase Hik2 (434 aa).

The region spanning 16–152 (ISLCQSQVRL…EAIAKSLAVA (137 aa)) is the GAF domain. Residue cysteine 19 coordinates [3Fe-4S] cluster. Residues 182-432 (DLLHQLRNPL…TFTLWLRSGE (251 aa)) enclose the Histidine kinase domain. Position 185 is a phosphohistidine; by autocatalysis (histidine 185). The short motif at 357 to 361 (DTGYG) is the G1 box element. Positions 386–390 (GTGLG) match the G2 box motif.

Belongs to the chloroplast sensor kinase protein family. Exists as monomers, tetramers, hexamers and other higher-order oligomers; all are able to autophosphorylate. Upon treatment with 0.5 M NaCl only tetramers are seen, which are probably inactive. Interacts with both RppA and Rre1. The cofactor is [3Fe-4S] cluster. Autophosphorylates, probably on His-185.

It localises to the cytoplasm. The enzyme catalyses ATP + protein L-histidine = ADP + protein N-phospho-L-histidine.. Its activity is regulated as follows. Autophosphorylation is inhibited by Na(+) but not by Cl(-). Reducing agents dithionite, duroquinol and decyl-plastoquinone, but not NADPH or ferredoxin inhibit autophosphorylation. Oxidation of the Fe-S cluster (with potassium ferricyanide) induces a conformational change that is conducive to its autophosphorylation activity. Its function is as follows. Member of possibly 2 two-component regulatory system(s) Hik2/Rre1 and Hik2/RppA. Transduces PQ (plastoquinone) redox signals to photosystem gene expression machinery during the adjustment of photosystem stoichiometry. Reduced PQ suppresses its autophosphorylation activity (i.e. kinase activity is higher under oxidizing conditions). Member of two-component regulatory system Hik2/Rre1, controls expression of sigB (sll0306), sll0528, slr1119, slr0852 and ssr3188 in response to hyperosmotic stress. Activity responds to high salt (with a linear response as concentrations rise to 0.5 M NaCl); detects Cl(-) levels. Autophosphorylates and transfers phosphate to Rre1. May transfer phosphate to RppA in a possible Hik2/RppA two-component system. This chain is Sensor histidine kinase Hik2, found in Synechocystis sp. (strain ATCC 27184 / PCC 6803 / Kazusa).